The following is a 728-amino-acid chain: Microtubule-associated protein VP5 (728 aa).

This sequence belongs to the reoviridae microtubule-associated protein family.

The protein localises to the virion. The protein resides in the host cytoplasm. Its subcellular location is the host cytoskeleton. Minor inner capsid component. Displays NTPase and RNA 5'-triphosphatase (RTPase) activities. May function as a cofactor of polymerase. Associates with microtubules and plays a role in the formation, structural organization and morphology of viral inclusions, where the assembly of cores and the replication of viral RNA occur. The polypeptide is Microtubule-associated protein VP5 (S5) (Ctenopharyngodon idella (Grass carp)).